The primary structure comprises 1279 residues: Myosin-1 (1279 aa).

Residues 1-12 (MAIVKRGGRTRA) show a composition bias toward basic residues. The segment at 1-25 (MAIVKRGGRTRAKQQQAPAKVNNGL) is disordered. A Myosin motor domain is found at 48 to 736 (VGVSDLTLLS…TLFALEDMRD (689 aa)). 141–148 (GESGAGKT) provides a ligand contact to ATP. The residue at position 371 (S371) is a Phosphoserine. An actin-binding region spans residues 419-502 (SIGILDIYGF…PGLFAALNDS (84 aa)). IQ domains are found at residues 740–760 (HNMAARIQRAWRRYIKRKEDA) and 761–786 (AKTIQRAWRMKNHGNQFEQFRDYGNS). The region spanning 794–984 (RRRFSMLGSR…SGTVTVNQGL (191 aa)) is the TH1 domain. Polar residues-rich tracts occupy residues 980-989 (VNQGLPPTSK) and 1018-1027 (AFQSQPTASY). 4 disordered regions span residues 980–1001 (VNQGLPPTSKNPKRPRAKLGKV), 1014–1132 (LAQP…PKHP), 1189–1216 (SPSASAATQSYAPTTASSNPVSTASSNT), and 1253–1279 (LADALKKRQGVTRDDSDAEDDDDDDDW). Low complexity-rich tracts occupy residues 1038–1056 (TQLYATQHQPQQPQVPTRT) and 1067–1095 (STQTAAQVSTLPQAARKPAAPARPAKKIA). The segment covering 1116 to 1126 (APPPPPPPPAL) has biased composition (pro residues). One can recognise an SH3 domain in the interval 1129–1189 (PKHPTYRAMY…PIDYLQEESS (61 aa)). Residues 1189–1209 (SPSASAATQSYAPTTASSNPV) show a composition bias toward polar residues. The span at 1268–1279 (SDAEDDDDDDDW) shows a compositional bias: acidic residues.

This sequence belongs to the TRAFAC class myosin-kinesin ATPase superfamily. Myosin family. Phosphorylation of the TEDS site (Ser-371) is required for the polarization of the actin cytoskeleton. Phosphorylation probably activates the myosin-I ATPase activity.

It localises to the cytoplasm. The protein localises to the cytoskeleton. It is found in the actin patch. Its function is as follows. Type-I myosin implicated in the organization of the actin cytoskeleton. Required for proper actin cytoskeleton polarization. At the cell cortex, assembles in patch-like structures together with proteins from the actin-polymerizing machinery and promotes actin assembly. Functions as actin nucleation-promoting factor (NPF) for the Arp2/3 complex. This Lodderomyces elongisporus (strain ATCC 11503 / CBS 2605 / JCM 1781 / NBRC 1676 / NRRL YB-4239) (Yeast) protein is Myosin-1 (MYO1).